Reading from the N-terminus, the 216-residue chain is Adenylate kinase (216 aa).

10 to 15 (GAGKGT) serves as a coordination point for ATP. Positions 30-59 (STGDMLRAAVKAGTPLGLELKKVMDAGQLV) are NMP. AMP contacts are provided by residues Thr31, Arg36, 57 to 59 (QLV), 85 to 88 (GFPR), and Gln92. Positions 122-159 (GRRVHLASGRTYHIQYNPPKVEGKDDVTGEDLIQRDDD) are LID. ATP is bound by residues Arg123 and 132-133 (TY). Residues Arg156 and Arg167 each coordinate AMP. Residue Gly202 participates in ATP binding.

Belongs to the adenylate kinase family. Monomer.

Its subcellular location is the cytoplasm. The catalysed reaction is AMP + ATP = 2 ADP. It participates in purine metabolism; AMP biosynthesis via salvage pathway; AMP from ADP: step 1/1. Functionally, catalyzes the reversible transfer of the terminal phosphate group between ATP and AMP. Plays an important role in cellular energy homeostasis and in adenine nucleotide metabolism. This Pseudomonas putida (strain GB-1) protein is Adenylate kinase.